Reading from the N-terminus, the 431-residue chain is Aspartate--tRNA(Asp/Asn) ligase (431 aa).

Glu-170 lines the L-aspartate pocket. Residues 192-195 (QLYK) are aspartate. Arg-214 provides a ligand contact to L-aspartate. Residues 214–216 (RAE), 222–224 (RHL), and Glu-354 each bind ATP. Residues Glu-354 and Ser-357 each contribute to the Mg(2+) site. Residues Ser-357 and Arg-361 each coordinate L-aspartate. 402-405 (GLER) serves as a coordination point for ATP.

The protein belongs to the class-II aminoacyl-tRNA synthetase family. Type 2 subfamily. As to quaternary structure, homodimer. It depends on Mg(2+) as a cofactor.

The protein resides in the cytoplasm. The enzyme catalyses tRNA(Asx) + L-aspartate + ATP = L-aspartyl-tRNA(Asx) + AMP + diphosphate. Aspartyl-tRNA synthetase with relaxed tRNA specificity since it is able to aspartylate not only its cognate tRNA(Asp) but also tRNA(Asn). Reaction proceeds in two steps: L-aspartate is first activated by ATP to form Asp-AMP and then transferred to the acceptor end of tRNA(Asp/Asn). The polypeptide is Aspartate--tRNA(Asp/Asn) ligase (Methanopyrus kandleri (strain AV19 / DSM 6324 / JCM 9639 / NBRC 100938)).